Consider the following 37-residue polypeptide: uncharacterized protein (37 aa).

A helical membrane pass occupies residues 1–21 (MQDLEIFLSIFAFIFVFYFGA).

The protein resides in the endoplasmic reticulum membrane. This is an uncharacterized protein from Saccharomyces cerevisiae (strain ATCC 204508 / S288c) (Baker's yeast).